Reading from the N-terminus, the 934-residue chain is Coiled-coil domain-containing protein 39 (934 aa).

4 coiled-coil regions span residues 17–133 (IPVA…DGLK), 164–512 (SQQD…HNDL), 540–615 (VDRS…SQIR), and 664–826 (VIKA…EQDI). The tract at residues 866-934 (LPTAKGPSSR…NIPKGKKLNK (69 aa)) is disordered. Residues 873 to 892 (SSRSSSQSSLSSIRSLEDSI) show a composition bias toward low complexity. A phosphoserine mark is found at Ser887 and Ser895. Low complexity predominate over residues 912-925 (RSDSSRSSSGSNSN).

This sequence belongs to the CCDC39 family.

Its subcellular location is the cytoplasm. It is found in the cytoskeleton. The protein resides in the cilium axoneme. Functionally, required for assembly of dynein regulatory complex (DRC) and inner dynein arm (IDA) complexes, which are responsible for ciliary beat regulation, thereby playing a central role in motility in cilia and flagella. Probably acts together with CCDC40 to form a molecular ruler that determines the 96 nanometer (nm) repeat length and arrangements of components in cilia and flagella. Not required for outer dynein arm complexes assembly. This Rattus norvegicus (Rat) protein is Coiled-coil domain-containing protein 39 (Ccdc39).